A 430-amino-acid polypeptide reads, in one-letter code: Enolase (430 aa).

Gln166 serves as a coordination point for (2R)-2-phosphoglycerate. Glu208 serves as the catalytic Proton donor. The Mg(2+) site is built by Asp245, Glu288, and Asp315. Residues Lys340, Arg369, Ser370, and Lys391 each coordinate (2R)-2-phosphoglycerate. Residue Lys340 is the Proton acceptor of the active site.

This sequence belongs to the enolase family. Mg(2+) is required as a cofactor.

It localises to the cytoplasm. It is found in the secreted. The protein localises to the cell surface. The catalysed reaction is (2R)-2-phosphoglycerate = phosphoenolpyruvate + H2O. The protein operates within carbohydrate degradation; glycolysis; pyruvate from D-glyceraldehyde 3-phosphate: step 4/5. Catalyzes the reversible conversion of 2-phosphoglycerate (2-PG) into phosphoenolpyruvate (PEP). It is essential for the degradation of carbohydrates via glycolysis. The polypeptide is Enolase (Clostridium beijerinckii (strain ATCC 51743 / NCIMB 8052) (Clostridium acetobutylicum)).